The chain runs to 454 residues: tRNA-2-methylthio-N(6)-dimethylallyladenosine synthase (454 aa).

An MTTase N-terminal domain is found at 6 to 122 (RRYHITTFGC…LKDLLESVFA (117 aa)). 6 residues coordinate [4Fe-4S] cluster: cysteine 15, cysteine 51, cysteine 85, cysteine 157, cysteine 161, and cysteine 164. The 238-residue stretch at 143-380 (RDSTVTAWVN…NHLVNVKAAE (238 aa)) folds into the Radical SAM core domain. Positions 383–447 (QRYMGRIEEV…AFSLTGEPIE (65 aa)) constitute a TRAM domain.

It belongs to the methylthiotransferase family. MiaB subfamily. In terms of assembly, monomer. It depends on [4Fe-4S] cluster as a cofactor.

Its subcellular location is the cytoplasm. The enzyme catalyses N(6)-dimethylallyladenosine(37) in tRNA + (sulfur carrier)-SH + AH2 + 2 S-adenosyl-L-methionine = 2-methylsulfanyl-N(6)-dimethylallyladenosine(37) in tRNA + (sulfur carrier)-H + 5'-deoxyadenosine + L-methionine + A + S-adenosyl-L-homocysteine + 2 H(+). Catalyzes the methylthiolation of N6-(dimethylallyl)adenosine (i(6)A), leading to the formation of 2-methylthio-N6-(dimethylallyl)adenosine (ms(2)i(6)A) at position 37 in tRNAs that read codons beginning with uridine. This Nostoc sp. (strain PCC 7120 / SAG 25.82 / UTEX 2576) protein is tRNA-2-methylthio-N(6)-dimethylallyladenosine synthase.